Here is a 680-residue protein sequence, read N- to C-terminus: Oligopeptidase A (680 aa).

Histidine 469 is a Zn(2+) binding site. Residue glutamate 470 is part of the active site. Zn(2+) contacts are provided by histidine 473 and histidine 476.

The protein belongs to the peptidase M3 family. Zn(2+) serves as cofactor.

The enzyme catalyses Hydrolysis of oligopeptides, with broad specificity. Gly or Ala commonly occur as P1 or P1' residues, but more distant residues are also important, as is shown by the fact that Z-Gly-Pro-Gly-|-Gly-Pro-Ala is cleaved, but not Z-(Gly)(5).. Functionally, may play a specific role in the degradation of signal peptides after they are released from precursor forms of secreted proteins. Can cleave N-acetyl-L-Ala(4). The polypeptide is Oligopeptidase A (prlC) (Salmonella typhimurium (strain LT2 / SGSC1412 / ATCC 700720)).